The sequence spans 249 residues: uncharacterized protein (249 aa).

11-34 (IFGGRSQIGGELARRLAAGATMVL) serves as a coordination point for NADP(+). S142 is a binding site for substrate. Residue Y155 is the Proton acceptor of the active site.

Belongs to the short-chain dehydrogenases/reductases (SDR) family.

This is an uncharacterized protein from Mycobacterium tuberculosis (strain CDC 1551 / Oshkosh).